A 48-amino-acid polypeptide reads, in one-letter code: Large ribosomal subunit protein bL32 (48 aa).

Residues 1 to 20 (MAVPKRRVSKTRAAKRRTHY) show a composition bias toward basic residues. A disordered region spans residues 1-48 (MAVPKRRVSKTRAAKRRTHYKVSLPIPVKDKDGSWKLPHRINTKTGEY).

This sequence belongs to the bacterial ribosomal protein bL32 family.

The chain is Large ribosomal subunit protein bL32 from Campylobacter hominis (strain ATCC BAA-381 / DSM 21671 / CCUG 45161 / LMG 19568 / NCTC 13146 / CH001A).